The primary structure comprises 147 residues: Large ribosomal subunit protein uL16 (147 aa).

This sequence belongs to the universal ribosomal protein uL16 family. In terms of assembly, part of the 50S ribosomal subunit.

Binds 23S rRNA and is also seen to make contacts with the A and possibly P site tRNAs. This Caldicellulosiruptor saccharolyticus (strain ATCC 43494 / DSM 8903 / Tp8T 6331) protein is Large ribosomal subunit protein uL16.